Reading from the N-terminus, the 311-residue chain is Aspartate carbamoyltransferase catalytic subunit (311 aa).

Carbamoyl phosphate is bound by residues arginine 59 and threonine 60. Lysine 87 contributes to the L-aspartate binding site. 3 residues coordinate carbamoyl phosphate: arginine 109, histidine 139, and glutamine 142. 2 residues coordinate L-aspartate: arginine 172 and arginine 224. Alanine 265 and proline 266 together coordinate carbamoyl phosphate.

It belongs to the aspartate/ornithine carbamoyltransferase superfamily. ATCase family. Heterododecamer (2C3:3R2) of six catalytic PyrB chains organized as two trimers (C3), and six regulatory PyrI chains organized as three dimers (R2).

It carries out the reaction carbamoyl phosphate + L-aspartate = N-carbamoyl-L-aspartate + phosphate + H(+). It functions in the pathway pyrimidine metabolism; UMP biosynthesis via de novo pathway; (S)-dihydroorotate from bicarbonate: step 2/3. Catalyzes the condensation of carbamoyl phosphate and aspartate to form carbamoyl aspartate and inorganic phosphate, the committed step in the de novo pyrimidine nucleotide biosynthesis pathway. This Streptococcus equi subsp. zooepidemicus (strain MGCS10565) protein is Aspartate carbamoyltransferase catalytic subunit.